Here is a 73-residue protein sequence, read N- to C-terminus: Protein BP4C (73 aa).

In terms of tissue distribution, pollen specific.

In Brassica napus (Rape), this protein is Protein BP4C (BP4C).